A 218-amino-acid chain; its full sequence is Ribose-5-phosphate isomerase A (218 aa).

Substrate is bound by residues 28–31, 81–84, and 94–97; these read TGST, DGAD, and KGGG. Glu-103 serves as the catalytic Proton acceptor. Residue Lys-121 participates in substrate binding.

This sequence belongs to the ribose 5-phosphate isomerase family. As to quaternary structure, homodimer.

The enzyme catalyses aldehydo-D-ribose 5-phosphate = D-ribulose 5-phosphate. The protein operates within carbohydrate degradation; pentose phosphate pathway; D-ribose 5-phosphate from D-ribulose 5-phosphate (non-oxidative stage): step 1/1. Its function is as follows. Catalyzes the reversible conversion of ribose-5-phosphate to ribulose 5-phosphate. This is Ribose-5-phosphate isomerase A from Yersinia pseudotuberculosis serotype IB (strain PB1/+).